The following is a 119-amino-acid chain: Hydrogenase maturation factor HypA (119 aa).

His-2 provides a ligand contact to Ni(2+). Zn(2+)-binding residues include Cys-73, Cys-76, Cys-90, and Cys-93.

This sequence belongs to the HypA/HybF family.

Functionally, involved in the maturation of [NiFe] hydrogenases. Required for nickel insertion into the metal center of the hydrogenase. The polypeptide is Hydrogenase maturation factor HypA (Wolinella succinogenes (strain ATCC 29543 / DSM 1740 / CCUG 13145 / JCM 31913 / LMG 7466 / NCTC 11488 / FDC 602W) (Vibrio succinogenes)).